The following is a 29-amino-acid chain: Cyclotide mden-F (29 aa).

Residues 1–29 (GLPICGETCFFGKCNTPKCTCINPICYKN) constitute a cross-link (cyclopeptide (Gly-Asn)). Disulfide bonds link C5-C19, C9-C21, and C14-C26.

It belongs to the cyclotide family. Post-translationally, this is a cyclic peptide.

Probably participates in a plant defense mechanism. The sequence is that of Cyclotide mden-F from Melicytus dentatus (Tree violet).